The following is a 122-amino-acid chain: Large ribosomal subunit protein uL14 (122 aa).

Belongs to the universal ribosomal protein uL14 family. In terms of assembly, part of the 50S ribosomal subunit. Forms a cluster with proteins L3 and L19. In the 70S ribosome, L14 and L19 interact and together make contacts with the 16S rRNA in bridges B5 and B8.

In terms of biological role, binds to 23S rRNA. Forms part of two intersubunit bridges in the 70S ribosome. The polypeptide is Large ribosomal subunit protein uL14 (Shouchella clausii (strain KSM-K16) (Alkalihalobacillus clausii)).